We begin with the raw amino-acid sequence, 245 residues long: Nodulation protein G (245 aa).

11–35 (VTGASGAIGGAIARVLHAQGAIVGL) provides a ligand contact to NAD(+). A substrate-binding site is contributed by Ser-139. Tyr-152 serves as the catalytic Proton acceptor.

Belongs to the short-chain dehydrogenases/reductases (SDR) family.

Its function is as follows. Proposed to modify Nod factor fatty acyl chain. In Rhizobium meliloti (strain 1021) (Ensifer meliloti), this protein is Nodulation protein G (nodG).